A 547-amino-acid polypeptide reads, in one-letter code: Chaperonin GroEL (547 aa).

Residues 30 to 33 (TLGP), K51, 87 to 91 (DGTTT), G415, and D496 contribute to the ATP site.

Belongs to the chaperonin (HSP60) family. As to quaternary structure, forms a cylinder of 14 subunits composed of two heptameric rings stacked back-to-back. Interacts with the co-chaperonin GroES.

Its subcellular location is the cytoplasm. The enzyme catalyses ATP + H2O + a folded polypeptide = ADP + phosphate + an unfolded polypeptide.. Together with its co-chaperonin GroES, plays an essential role in assisting protein folding. The GroEL-GroES system forms a nano-cage that allows encapsulation of the non-native substrate proteins and provides a physical environment optimized to promote and accelerate protein folding. This Actinobacillus pleuropneumoniae (Haemophilus pleuropneumoniae) protein is Chaperonin GroEL.